The primary structure comprises 225 residues: Probable GTP-binding protein EngB (225 aa).

Residues 40–224 (GPPEVAFAGR…RAAIVHAVTA (185 aa)) enclose the EngB-type G domain. GTP is bound by residues 48 to 55 (GRSNVGKS), 75 to 79 (GRTQE), 102 to 105 (DMPG), 169 to 172 (TKAD), and 203 to 205 (TSS). Mg(2+) contacts are provided by serine 55 and threonine 77.

This sequence belongs to the TRAFAC class TrmE-Era-EngA-EngB-Septin-like GTPase superfamily. EngB GTPase family. Requires Mg(2+) as cofactor.

Necessary for normal cell division and for the maintenance of normal septation. This chain is Probable GTP-binding protein EngB, found in Chelativorans sp. (strain BNC1).